A 364-amino-acid chain; its full sequence is Probable dual-specificity RNA methyltransferase RlmN (364 aa).

Glutamate 107 (proton acceptor) is an active-site residue. One can recognise a Radical SAM core domain in the interval 113 to 346 (HDYGNSVCVT…ATIRREQGSD (234 aa)). Residues cysteine 120 and cysteine 351 are joined by a disulfide bond. Residues cysteine 127, cysteine 131, and cysteine 134 each coordinate [4Fe-4S] cluster. S-adenosyl-L-methionine is bound by residues 177–178 (GE), serine 209, 232–234 (SLH), and asparagine 308. The active-site S-methylcysteine intermediate is cysteine 351.

Belongs to the radical SAM superfamily. RlmN family. [4Fe-4S] cluster serves as cofactor.

Its subcellular location is the cytoplasm. The enzyme catalyses adenosine(2503) in 23S rRNA + 2 reduced [2Fe-2S]-[ferredoxin] + 2 S-adenosyl-L-methionine = 2-methyladenosine(2503) in 23S rRNA + 5'-deoxyadenosine + L-methionine + 2 oxidized [2Fe-2S]-[ferredoxin] + S-adenosyl-L-homocysteine. It catalyses the reaction adenosine(37) in tRNA + 2 reduced [2Fe-2S]-[ferredoxin] + 2 S-adenosyl-L-methionine = 2-methyladenosine(37) in tRNA + 5'-deoxyadenosine + L-methionine + 2 oxidized [2Fe-2S]-[ferredoxin] + S-adenosyl-L-homocysteine. In terms of biological role, specifically methylates position 2 of adenine 2503 in 23S rRNA and position 2 of adenine 37 in tRNAs. Confers resistance to some classes of antibiotics. The sequence is that of Probable dual-specificity RNA methyltransferase RlmN from Staphylococcus aureus (strain Mu3 / ATCC 700698).